We begin with the raw amino-acid sequence, 656 residues long: Solute carrier family 5 member 4A (656 aa).

The Cytoplasmic segment spans residues 1–28 (MASTASVSTSTASSELSSLSNNINNAAD). Residues 29–47 (ISVIVIYFVVVMAVGVWAM) form a helical membrane-spanning segment. The Extracellular segment spans residues 48-64 (LKTNRSTVGGFFLAGRS). The helical transmembrane segment at 65–85 (MTWWPMGASLFASNIGSGHFV) threads the bilayer. The Cytoplasmic portion of the chain corresponds to 86–105 (GLAGTGAASGIAVTAFESHS). Residues 106 to 126 (FALLLVLGWIFVPIYIKAGVM) traverse the membrane as a helical segment. Residues 127–171 (TMPEYLKKRFGGKRLQIYLSILFLFICVILTISADIFSGAIFIKL) are Extracellular-facing. Residues 172 to 191 (ALGLNLYLAILILLAITAIF) form a helical membrane-spanning segment. The Cytoplasmic segment spans residues 192–208 (TITGGLASVIYTDTVQA). A helical transmembrane segment spans residues 209-229 (VIMLVGSFILMVFAFVEVGGY). The Extracellular portion of the chain corresponds to 230-270 (ESFTEKFMNAIPSVVEGDNLTINSRCYTPQPDSFHIFRDPV). N-linked (GlcNAc...) asparagine glycosylation occurs at Asn-248. A helical membrane pass occupies residues 271–291 (TGDIPWPGTAFGMPITALWYW). The Cytoplasmic portion of the chain corresponds to 292-314 (CINQVIVQRCLCGKNLSHVKAAC). Residues 315–334 (ILCGYLKLLPLFFMVMPGMI) traverse the membrane as a helical segment. At 335–423 (SRILYTDMVA…RKKASERELL (89 aa)) the chain is on the extracellular side. The helical transmembrane segment at 424 to 443 (IAGRLFVSVLIVTSILWVPI) threads the bilayer. Residues 444-455 (VEVSQGGQLVHY) lie on the Cytoplasmic side of the membrane. The chain crosses the membrane as a helical span at residues 456-476 (TEAISSYLGPPIAAVFLVAVF). Over 477 to 526 (CKRANEQGAFWGLMVGLVMGLIRMIAEFSYGTGSCLAPSSCPKIICGVHY) the chain is Extracellular. The chain crosses the membrane as a helical span at residues 527 to 547 (LYFAIILFFVCILVILGVSYL). At 548 to 634 (TKPIPDVHLH…TDTTEKPFWR (87 aa)) the chain is on the cytoplasmic side. The interval 574 to 593 (DAEDKEENGADDRTEEDQTE) is disordered. The helical transmembrane segment at 635 to 655 (TVMNVNVILLLAVAAFFYGYF) threads the bilayer.

It belongs to the sodium:solute symporter (SSF) (TC 2.A.21) family. Expressed in small intestine. Expressed in kidney.

The protein resides in the cell membrane. Its activity is regulated as follows. Not inhibited by phlorizin. In terms of biological role, does not function as sodium/D-glucose symporter. Generates D-glucose-induced depolarization in a pH-dependent manner, with activity in acidic conditions (pH 5) but not neutral conditions. This is Solute carrier family 5 member 4A from Mus musculus (Mouse).